The chain runs to 948 residues: Coiled-coil domain-containing protein 66 (948 aa).

2 positions are modified to phosphothreonine: T115 and T121. Position 369 is a phosphoserine (S369). Residues 458-499 (DRRRQKQLEHQKAITAQVEEKRRKKQLEEEQRKKEEQEEELR) are disordered. A coiled-coil region spans residues 467–558 (HQKAITAQVE…EQRIRELAQK (92 aa)). A mediates localization to cilia, centrosomes and spindle microtubules and the interaction with PCM1, CEP290, CEP104 and CSPP1 region spans residues 570–948 (GVDTIQMEYN…NQEESFGSSF (379 aa)). Residue S606 is modified to Phosphoserine. Disordered regions lie at residues 690–713 (QTKH…KRYI) and 788–808 (SFSK…RTQQ).

Homodimer; disulfide-linked. Interacts with CEP290. Interacts with PCM1. Interacts with ARMC9, TOGARAM1, CSPP1 and CEP104. Interacts with CDK5RAP2, CEP152, CEP192, TBG1 and PRC1. Widely expressed (at protein level). Expressed in retina, mainly in photoreceptors but also in outer plexiform and ganglion cell layers (at protein level).

The protein localises to the cytoplasm. It is found in the cytoskeleton. Its subcellular location is the microtubule organizing center. It localises to the centrosome. The protein resides in the centriolar satellite. The protein localises to the cell projection. It is found in the cilium. Its subcellular location is the cilium basal body. It localises to the cilium axoneme. The protein resides in the photoreceptor inner segment. The protein localises to the photoreceptor outer segment. It is found in the spindle. Its subcellular location is the midbody. Microtubule-binding protein required for ciliogenesis. May function in ciliogenesis by mediating the transport of proteins like BBS4 to the cilium, but also through the organization of the centriolar satellites. Required for the assembly of signaling-competent cilia with proper structure and length. Mediates this function in part by regulating transition zone assembly and basal body recruitment of the IFT-B complex. Cooperates with the ciliopathy proteins CSPP1 and CEP104 during cilium length regulation. Plays two important roles during cell division. First, is required for mitotic progression via regulation of spindle assembly, organization and orientation, levels of spindle microtubules (MTs), kinetochore-fiber integrity, and chromosome alignment. Second, functions during cytokinesis in part by regulating assembly and organization of central spindle and midbody MTs. Plays a role in retina morphogenesis and/or homeostasis. This is Coiled-coil domain-containing protein 66 from Homo sapiens (Human).